The sequence spans 825 residues: Extracellular exo-alpha-L-arabinofuranosidase (825 aa).

The N-terminal stretch at 1–29 is a signal peptide; the sequence is MSRIRWRYGTAATALLVAAGLVPTATAHA. Glutamate 58 serves as a coordination point for alpha-L-arabinofuranose. The 146-residue stretch at 70 to 215 folds into the CBM-cenC domain; the sequence is AELVQNRSFE…ALDMVSLFPR (146 aa). Alpha-L-arabinofuranose is bound by residues cysteine 247 and 379-380; that span reads NE. The active-site Proton donor/acceptor is glutamate 380.

Belongs to the glycosyl hydrolase 51 family.

The protein resides in the secreted. The catalysed reaction is Hydrolysis of terminal non-reducing alpha-L-arabinofuranoside residues in alpha-L-arabinosides.. Involved in the degradation of arabinan and is a key enzyme in the complete degradation of the plant cell wall. Catalyzes the cleavage of terminal alpha-L-arabinofuranosyl residues of arabinan present in the arabinofuranosyl polysaccharides or oligosaccharides. It cannot act on other arabinose-containing polysaccharides and arabinoxylo-oligosaccharides. It leaves most of the polymer intact, including most of the main-chain residues and the arabinose side chains. It acts preferentially on the linear alpha-(1-&gt;2)-linked arabinofuranobiosides and alpha-(1-&gt;3)-linked arabinofuranobiosides, and is much less effective on alpha-(1-&gt;5)-linked arabinofuranobiosides. It also hydrolyzes the terminal alpha-(1-&gt;3)-linked arabinofuranotriosides in preference to the alpha-(1-&gt;5)-linked arabinofuranotriosides. This Streptomyces chartreusis protein is Extracellular exo-alpha-L-arabinofuranosidase.